Reading from the N-terminus, the 211-residue chain is tRNA (pseudouridine(54)-N(1))-methyltransferase (211 aa).

Positions 128, 150, and 183 each coordinate S-adenosyl-L-methionine.

Belongs to the methyltransferase superfamily. TrmY family. Homodimer.

The protein resides in the cytoplasm. The enzyme catalyses pseudouridine(54) in tRNA + S-adenosyl-L-methionine = N(1)-methylpseudouridine(54) in tRNA + S-adenosyl-L-homocysteine + H(+). Functionally, specifically catalyzes the N1-methylation of pseudouridine at position 54 (Psi54) in tRNAs. The sequence is that of tRNA (pseudouridine(54)-N(1))-methyltransferase from Methanosarcina mazei (strain ATCC BAA-159 / DSM 3647 / Goe1 / Go1 / JCM 11833 / OCM 88) (Methanosarcina frisia).